We begin with the raw amino-acid sequence, 396 residues long: Elongation factor Tu (396 aa).

The tr-type G domain occupies 11 to 205; sequence KPHVNIGTIG…TVDEYIPTPE (195 aa). The G1 stretch occupies residues 20-27; sequence GHVDHGKT. 20-27 serves as a coordination point for GTP; that stretch reads GHVDHGKT. Thr-27 provides a ligand contact to Mg(2+). The interval 61–65 is G2; the sequence is GITIN. The tract at residues 82-85 is G3; that stretch reads DAPG. GTP-binding positions include 82-86 and 137-140; these read DAPGH and NKVD. Residues 137–140 are G4; the sequence is NKVD. Residues 175–177 are G5; the sequence is SAL.

The protein belongs to the TRAFAC class translation factor GTPase superfamily. Classic translation factor GTPase family. EF-Tu/EF-1A subfamily. Monomer.

Its subcellular location is the cytoplasm. It carries out the reaction GTP + H2O = GDP + phosphate + H(+). Its function is as follows. GTP hydrolase that promotes the GTP-dependent binding of aminoacyl-tRNA to the A-site of ribosomes during protein biosynthesis. In Lactobacillus gasseri (strain ATCC 33323 / DSM 20243 / BCRC 14619 / CIP 102991 / JCM 1131 / KCTC 3163 / NCIMB 11718 / NCTC 13722 / AM63), this protein is Elongation factor Tu.